Consider the following 206-residue polypeptide: Large ribosomal subunit protein uL4 (206 aa).

The segment at 55-80 is disordered; it reads AFVSGGGAKPWRQKGTGRARSGSNRS.

This sequence belongs to the universal ribosomal protein uL4 family. In terms of assembly, part of the 50S ribosomal subunit.

Functionally, one of the primary rRNA binding proteins, this protein initially binds near the 5'-end of the 23S rRNA. It is important during the early stages of 50S assembly. It makes multiple contacts with different domains of the 23S rRNA in the assembled 50S subunit and ribosome. Its function is as follows. Forms part of the polypeptide exit tunnel. The chain is Large ribosomal subunit protein uL4 from Nitratidesulfovibrio vulgaris (strain DSM 19637 / Miyazaki F) (Desulfovibrio vulgaris).